Reading from the N-terminus, the 438-residue chain is Enolase (438 aa).

Substrate is bound by residues His-159 and Glu-168. Glu-211 functions as the Proton donor in the catalytic mechanism. Positions 246, 297, and 322 each coordinate Mg(2+). Glu-297 and Asp-322 together coordinate substrate. The active-site Proton acceptor is the Lys-347. Substrate contacts are provided by residues 374 to 377 and Lys-398; that span reads SHRS.

The protein belongs to the enolase family. In terms of assembly, homodimer. Mg(2+) is required as a cofactor.

The protein resides in the cytoplasm. It catalyses the reaction (2R)-2-phosphoglycerate = phosphoenolpyruvate + H2O. The protein operates within carbohydrate degradation; glycolysis; pyruvate from D-glyceraldehyde 3-phosphate: step 4/5. This is Enolase (enoA) from Penicillium chrysogenum (Penicillium notatum).